The primary structure comprises 1050 residues: MTAQQEVKPQATPALSQILFRRDWENPQITQYNRLEAHPPFYSWRHLDAAQNDTPSPQRQLLNGQWSFSYFTQPESVPDEWVEHDLPEAISMPVPSNWQLHGYDIPIYTNVQYPIPVDPPRVPQNNPTGCYSYNFTLEPDWILSGQTRIIFDGVNSAFYLWCNGRWVGYSQDSRLPAEFDLTPYLKAGNNRIAVLVLRWSDGSYLEDQDMWRMSGIFRDVSLLHKPDIHLRDIHISTHLSPEFSSAHLEVMAAVNIPLLDINNSQVTKAYQIQVQLWLADSLVASLRQPLGTQPIDERGHYTDRTHLSLRVEHPLLWSAEQPALYRTVVSLLDSQQKLIEAEAYDVGFRQVAIHQGLLKINGKAVLIRGVNRHEHHPQTGQAIDEESMLQDIILMKQHNFNAVRCSHYPNHPLWYRLCDRYGLYVVDEANIETHGMQPMRRLADDPQWFSAFSERVTRMVQRDRNHPCIIIWSLGNESGHGATHDALYRWIKTNDPTRPVQYEGGGANTQATDIVCPMYARVDEDQPFPAVPKWAIKKWIGLPNESRPLILCEYAHAMGNSFGGFARYWQAFRQYPRLQGGFVWDWVDQSLTRNDENGQPYWAYGGDFGDSPNDRQFCMNGLVFPDRTPHPCLYEAQCAQQFFQFSLVSTSPLIIKVTSEYLFRNSDNEHLYWRIELAGKSVLEGSFPLDLLPESTQQFSLTERLPAICGPGDLWLNVEVRQVEETPWSPSHHRCAWFQWRLPHSLAVLSRGLSDSATSNNLKLHQDIQHITVTHQQQHWQFNRQTGLLEQWCVGGENRLLTPLRDQFVRAPLDNDIGISETTRIDPNAWVERWKKAGIYQLEQRCLSLHADTLSQAIQISAEYIYEFAQEQLLHTHWLYRFDQQGHMTIDVRVQIATSLPSLARVGMCCQLSDIYENVEWLGLGPHENYPDRQLSAQHSHWSQPLDQMHTPYIFPSENGLRCNTSMLSYGNWQLTGQFHFGISRYSTQQLMAASHQHLLRSEAGTWLNIDGFHMGVGGDDSWSPSVHADNLLTNEIYQYQVCWQYKDSI.

2 residues coordinate substrate: asparagine 110 and aspartate 209. Residue aspartate 209 participates in Na(+) binding. Mg(2+)-binding residues include glutamate 432, histidine 434, and glutamate 477. Substrate contacts are provided by residues glutamate 477 and glutamate 553–histidine 556. Residue glutamate 477 is the Proton donor of the active site. The Nucleophile role is filled by glutamate 553. Asparagine 613 is a binding site for Mg(2+). Positions 617 and 620 each coordinate Na(+). Asparagine 620 and tryptophan 1023 together coordinate substrate.

The protein belongs to the glycosyl hydrolase 2 family. As to quaternary structure, homotetramer. Mg(2+) is required as a cofactor. The cofactor is Na(+).

The catalysed reaction is Hydrolysis of terminal non-reducing beta-D-galactose residues in beta-D-galactosides.. In Yersinia enterocolitica serotype O:8 / biotype 1B (strain NCTC 13174 / 8081), this protein is Beta-galactosidase.